A 744-amino-acid polypeptide reads, in one-letter code: MQKEMKMIKDEDVHFDLAVKKTPSFPHCLQPVASRGKAPQRHPFPEALRGPFSQFRYEPPPGDLDGFPGVFEGAGSRKRKSMPTKMPYNHPAEEVTLALHSEENKNHGLPNLPLLFPQPPRPKYDSQMIDLCNVGFQFYRSLEHFGGKPVKQEPIKPSAVWPQPTPTPFLPTPYPYYPKVHPGLMFPFFVPSSSPFPFSRHTFLPKQPPEPLLPRKAEPQESEETKQKVERVDVNVQIDDSYYVDVGGSQKRWQCPTCEKSYTSKYNLVTHILGHSGIKPHACTHCGKLFKQLSHLHTHMLTHQGTRPHKCQVCHKAFTQTSHLKRHMMQHSEVKPHNCRVCGRGFAYPSELKAHEAKHASGRENICVECGLDFPTLAQLKRHLTTHRGPIQYNCSECDKTFQYPSQLQNHMMKHKDIRPYICSECGMEFVQPHHLKQHSLTHKGVKEHKCGICGREFTLLANMKRHVLIHTNIRAYQCHLCYKSFVQKQTLKAHMIVHSDVKPFKCKLCGKEFNRMHNLMGHMHLHSDSKPFKCLYCPSKFTLKGNLTRHMKVKHGVMERGLHSQGLGRGRIALAQTAGVLRSLEQEEPFDLSQKRRAKVPVFQSDGESAQGSHCHEEEEEDNCYEVEPYSPGLAPQSQQLCTPEDLSTKSEHAPEVLEEACKEEKEDASKGEWEKRSKGDLGAEGGQERDCAGRDECLSLRAFQSTRRGPSFSDYLYFKHRDESLKELLERKMEKQAVLLGI.

The segment at lysine 206 to lysine 228 is disordered. Over residues leucine 213–lysine 228 the composition is skewed to basic and acidic residues. 11 consecutive C2H2-type zinc fingers follow at residues tryptophan 253–histidine 275, histidine 281–histidine 303, histidine 309–histidine 331, histidine 337–histidine 359, asparagine 365–histidine 387, tyrosine 393–histidine 415, tyrosine 421–histidine 443, histidine 449–histidine 471, tyrosine 477–histidine 499, phenylalanine 505–histidine 527, and phenylalanine 533–histidine 556. The interaction with NRIP1 stretch occupies residues glycine 455–isoleucine 744. Positions proline 590–serine 594 match the PXDLS motif. 2 disordered regions span residues valine 603 to glutamate 627 and lysine 664 to aspartate 692.

In terms of assembly, interacts with ESR1 and NRIP1. Interacts (via PXDLS motif) with CTBP1. As to expression, expressed in immature and mature dendritic cells (DCs). Not detected in other blood cell types.

It localises to the nucleus. In terms of biological role, has transcriptional repression activity. Acts as a corepressor of ESR1; the function seems to involve CTBP1 and histone deacetylases. The chain is Zinc finger protein 366 from Homo sapiens (Human).